The primary structure comprises 365 residues: MQTLKVDLGERSYPIYIGEGLLDQPELLAPHIAGRQVAIVSNETVAPLYLERLSKALGAYSVLPVVLPDGEAHKNWETLQLIFDGLLTARHDRRTTVVALGGGVIGDMAGFAAACYQRGVDFIQVPTTLLSQVDSSVGGKTGINHPLGKNMVGAFYQPNAVLIDTTSLKTLPARELSAGLAEVIKYGLICDKPFLAWLEDNMQALRALDSAALTEAIRRSCAAKAAVVGADERESGVRATLNLGHTFGHAIETHMGYGVWLHGEAVAAGTVMALEMSMRLGWIDQAERDRGIRLLQDAGLPVVPPQEMTPAHFMEHMAVDKKVLDGRLRLVLLRQMGEAVVTDDYSKEILQATLSADYRAIVAQL.

NAD(+) is bound by residues 69–74, 103–107, 127–128, Lys140, and Lys149; these read DGEAHK, GVIGD, and TT. Positions 182, 245, and 262 each coordinate Zn(2+).

It belongs to the sugar phosphate cyclases superfamily. Dehydroquinate synthase family. Co(2+) serves as cofactor. Requires Zn(2+) as cofactor. It depends on NAD(+) as a cofactor.

It is found in the cytoplasm. It catalyses the reaction 7-phospho-2-dehydro-3-deoxy-D-arabino-heptonate = 3-dehydroquinate + phosphate. It functions in the pathway metabolic intermediate biosynthesis; chorismate biosynthesis; chorismate from D-erythrose 4-phosphate and phosphoenolpyruvate: step 2/7. In terms of biological role, catalyzes the conversion of 3-deoxy-D-arabino-heptulosonate 7-phosphate (DAHP) to dehydroquinate (DHQ). This Pseudomonas putida (strain ATCC 700007 / DSM 6899 / JCM 31910 / BCRC 17059 / LMG 24140 / F1) protein is 3-dehydroquinate synthase.